The primary structure comprises 643 residues: tRNA 5-methylaminomethyl-2-thiouridine biosynthesis bifunctional protein MnmC (643 aa).

Residues 1-223 (MPDRLVSATL…VDDRLVGDYA (223 aa)) are tRNA (mnm(5)s(2)U34)-methyltransferase. The segment at 247–643 (IGAGLAGCAV…LRARRVGSAG (397 aa)) is FAD-dependent cmnm(5)s(2)U34 oxidoreductase.

In the N-terminal section; belongs to the methyltransferase superfamily. tRNA (mnm(5)s(2)U34)-methyltransferase family. It in the C-terminal section; belongs to the DAO family. FAD serves as cofactor.

Its subcellular location is the cytoplasm. It carries out the reaction 5-aminomethyl-2-thiouridine(34) in tRNA + S-adenosyl-L-methionine = 5-methylaminomethyl-2-thiouridine(34) in tRNA + S-adenosyl-L-homocysteine + H(+). In terms of biological role, catalyzes the last two steps in the biosynthesis of 5-methylaminomethyl-2-thiouridine (mnm(5)s(2)U) at the wobble position (U34) in tRNA. Catalyzes the FAD-dependent demodification of cmnm(5)s(2)U34 to nm(5)s(2)U34, followed by the transfer of a methyl group from S-adenosyl-L-methionine to nm(5)s(2)U34, to form mnm(5)s(2)U34. This is tRNA 5-methylaminomethyl-2-thiouridine biosynthesis bifunctional protein MnmC from Burkholderia cenocepacia (strain HI2424).